The primary structure comprises 321 residues: ATP-dependent 6-phosphofructokinase (321 aa).

ATP is bound at residue G12. Residues 22-26 (RAVVR) and 55-60 (RYSVSD) each bind ADP. ATP is bound by residues 73–74 (RF) and 103–106 (GDGS). Residue D104 coordinates Mg(2+). A substrate-binding site is contributed by 127–129 (TID). D129 acts as the Proton acceptor in catalysis. R156 contributes to the ADP binding site. Residues R164 and 171–173 (MGR) each bind substrate. Residues 187–189 (GCE) and 215–217 (KRH) each bind ADP. Residues E224, R245, and 251 to 254 (HVQR) each bind substrate.

The protein belongs to the phosphofructokinase type A (PFKA) family. ATP-dependent PFK group I subfamily. Prokaryotic clade 'B1' sub-subfamily. As to quaternary structure, homotetramer. Mg(2+) serves as cofactor.

Its subcellular location is the cytoplasm. The catalysed reaction is beta-D-fructose 6-phosphate + ATP = beta-D-fructose 1,6-bisphosphate + ADP + H(+). It functions in the pathway carbohydrate degradation; glycolysis; D-glyceraldehyde 3-phosphate and glycerone phosphate from D-glucose: step 3/4. Allosterically activated by ADP and other diphosphonucleosides, and allosterically inhibited by phosphoenolpyruvate. Functionally, catalyzes the phosphorylation of D-fructose 6-phosphate to fructose 1,6-bisphosphate by ATP, the first committing step of glycolysis. The chain is ATP-dependent 6-phosphofructokinase from Actinobacillus succinogenes (strain ATCC 55618 / DSM 22257 / CCUG 43843 / 130Z).